A 206-amino-acid polypeptide reads, in one-letter code: Proteasome subunit beta 2 (206 aa).

The propeptide at 1 to 10 (MLHLKEKLKG) is removed in mature form; by autocatalysis. Catalysis depends on T11, which acts as the Nucleophile.

This sequence belongs to the peptidase T1B family. As to quaternary structure, the 20S proteasome core is composed of 14 alpha and 14 beta subunits that assemble into four stacked heptameric rings, resulting in a barrel-shaped structure. The two inner rings, each composed of seven catalytic beta subunits, are sandwiched by two outer rings, each composed of seven alpha subunits. The catalytic chamber with the active sites is on the inside of the barrel. Has a gated structure, the ends of the cylinder being occluded by the N-termini of the alpha-subunits. Is capped at one or both ends by the proteasome regulatory ATPase, PAN.

It is found in the cytoplasm. The enzyme catalyses Cleavage of peptide bonds with very broad specificity.. The formation of the proteasomal ATPase PAN-20S proteasome complex, via the docking of the C-termini of PAN into the intersubunit pockets in the alpha-rings, triggers opening of the gate for substrate entry. Interconversion between the open-gate and close-gate conformations leads to a dynamic regulation of the 20S proteasome proteolysis activity. Its function is as follows. Component of the proteasome core, a large protease complex with broad specificity involved in protein degradation. The chain is Proteasome subunit beta 2 from Pyrococcus furiosus (strain ATCC 43587 / DSM 3638 / JCM 8422 / Vc1).